Here is a 264-residue protein sequence, read N- to C-terminus: Thymidylate synthase (264 aa).

R21 contributes to the dUMP binding site. H51 is a binding site for (6R)-5,10-methylene-5,6,7,8-tetrahydrofolate. A dUMP-binding site is contributed by 126-127 (RR). C146 acts as the Nucleophile in catalysis. DUMP-binding positions include 166–169 (RSCD), N177, and 207–209 (HLY). D169 is a (6R)-5,10-methylene-5,6,7,8-tetrahydrofolate binding site. Residue A263 participates in (6R)-5,10-methylene-5,6,7,8-tetrahydrofolate binding.

The protein belongs to the thymidylate synthase family. Bacterial-type ThyA subfamily. As to quaternary structure, homodimer.

It is found in the cytoplasm. It catalyses the reaction dUMP + (6R)-5,10-methylene-5,6,7,8-tetrahydrofolate = 7,8-dihydrofolate + dTMP. It functions in the pathway pyrimidine metabolism; dTTP biosynthesis. In terms of biological role, catalyzes the reductive methylation of 2'-deoxyuridine-5'-monophosphate (dUMP) to 2'-deoxythymidine-5'-monophosphate (dTMP) while utilizing 5,10-methylenetetrahydrofolate (mTHF) as the methyl donor and reductant in the reaction, yielding dihydrofolate (DHF) as a by-product. This enzymatic reaction provides an intracellular de novo source of dTMP, an essential precursor for DNA biosynthesis. The sequence is that of Thymidylate synthase from Citrobacter koseri (strain ATCC BAA-895 / CDC 4225-83 / SGSC4696).